Consider the following 170-residue polypeptide: Ureidoglycolate lyase (170 aa).

It belongs to the ureidoglycolate lyase family. In terms of assembly, homodimer. Ni(2+) is required as a cofactor.

It catalyses the reaction (S)-ureidoglycolate = urea + glyoxylate. It participates in nitrogen metabolism; (S)-allantoin degradation. In terms of biological role, catalyzes the catabolism of the allantoin degradation intermediate (S)-ureidoglycolate, generating urea and glyoxylate. Involved in the utilization of allantoin as nitrogen source. This is Ureidoglycolate lyase from Pseudomonas syringae pv. tomato (strain ATCC BAA-871 / DC3000).